Reading from the N-terminus, the 264-residue chain is S-adenosylmethionine decarboxylase proenzyme (264 aa).

Catalysis depends on serine 112, which acts as the Schiff-base intermediate with substrate; via pyruvic acid. Position 112 is a pyruvic acid (Ser); by autocatalysis (serine 112). The Proton acceptor; for processing activity role is filled by histidine 117. The Proton donor; for catalytic activity role is filled by cysteine 140.

Belongs to the prokaryotic AdoMetDC family. Type 2 subfamily. In terms of assembly, heterooctamer of four alpha and four beta chains arranged as a tetramer of alpha/beta heterodimers. Pyruvate serves as cofactor. Post-translationally, is synthesized initially as an inactive proenzyme. Formation of the active enzyme involves a self-maturation process in which the active site pyruvoyl group is generated from an internal serine residue via an autocatalytic post-translational modification. Two non-identical subunits are generated from the proenzyme in this reaction, and the pyruvate is formed at the N-terminus of the alpha chain, which is derived from the carboxyl end of the proenzyme. The post-translation cleavage follows an unusual pathway, termed non-hydrolytic serinolysis, in which the side chain hydroxyl group of the serine supplies its oxygen atom to form the C-terminus of the beta chain, while the remainder of the serine residue undergoes an oxidative deamination to produce ammonia and the pyruvoyl group blocking the N-terminus of the alpha chain.

The enzyme catalyses S-adenosyl-L-methionine + H(+) = S-adenosyl 3-(methylsulfanyl)propylamine + CO2. It functions in the pathway amine and polyamine biosynthesis; S-adenosylmethioninamine biosynthesis; S-adenosylmethioninamine from S-adenosyl-L-methionine: step 1/1. Catalyzes the decarboxylation of S-adenosylmethionine to S-adenosylmethioninamine (dcAdoMet), the propylamine donor required for the synthesis of the polyamines spermine and spermidine from the diamine putrescine. This chain is S-adenosylmethionine decarboxylase proenzyme, found in Yersinia pseudotuberculosis serotype O:1b (strain IP 31758).